The sequence spans 800 residues: Transducin beta-like protein 3 (800 aa).

The residue at position 2 (Ala-2) is an N-acetylalanine. 13 WD repeats span residues Glu-64 to Lys-105, Ile-107 to His-146, Gly-149 to Val-190, Ala-193 to Thr-232, Leu-245 to Thr-284, Gly-290 to Gln-329, Gly-332 to Leu-372, Gly-374 to Cys-413, Gly-419 to Asn-459, Cys-477 to Val-516, Gly-519 to Glu-560, His-562 to Asp-602, and His-604 to Glu-642. Lys-407 is covalently cross-linked (Glycyl lysine isopeptide (Lys-Gly) (interchain with G-Cter in SUMO2)).

Part of the small subunit (SSU) processome, composed of more than 70 proteins and the RNA chaperone small nucleolar RNA (snoRNA) U3.

The protein resides in the nucleus. The protein localises to the nucleolus. Part of the small subunit (SSU) processome, first precursor of the small eukaryotic ribosomal subunit. During the assembly of the SSU processome in the nucleolus, many ribosome biogenesis factors, an RNA chaperone and ribosomal proteins associate with the nascent pre-rRNA and work in concert to generate RNA folding, modifications, rearrangements and cleavage as well as targeted degradation of pre-ribosomal RNA by the RNA exosome. The sequence is that of Transducin beta-like protein 3 (Tbl3) from Rattus norvegicus (Rat).